The following is a 206-amino-acid chain: Small ribosomal subunit protein uS4 (206 aa).

An S4 RNA-binding domain is found at 96–161 (RRLDNVVYRM…QGRIQAALAL (66 aa)).

This sequence belongs to the universal ribosomal protein uS4 family. Part of the 30S ribosomal subunit. Contacts protein S5. The interaction surface between S4 and S5 is involved in control of translational fidelity.

In terms of biological role, one of the primary rRNA binding proteins, it binds directly to 16S rRNA where it nucleates assembly of the body of the 30S subunit. Its function is as follows. With S5 and S12 plays an important role in translational accuracy. The polypeptide is Small ribosomal subunit protein uS4 (Legionella pneumophila (strain Paris)).